The chain runs to 159 residues: Phosphopantetheine adenylyltransferase (159 aa).

Serine 9 serves as a coordination point for substrate. Residues 9-10 and histidine 17 each bind ATP; that span reads SF. Residues lysine 41, leucine 73, and lysine 87 each contribute to the substrate site. Residues 88–90, glutamate 98, and 122–128 contribute to the ATP site; these read GLR and YSFLSSS.

This sequence belongs to the bacterial CoaD family. In terms of assembly, homohexamer. Mg(2+) is required as a cofactor.

It is found in the cytoplasm. It carries out the reaction (R)-4'-phosphopantetheine + ATP + H(+) = 3'-dephospho-CoA + diphosphate. It participates in cofactor biosynthesis; coenzyme A biosynthesis; CoA from (R)-pantothenate: step 4/5. Reversibly transfers an adenylyl group from ATP to 4'-phosphopantetheine, yielding dephospho-CoA (dPCoA) and pyrophosphate. The sequence is that of Phosphopantetheine adenylyltransferase from Streptomyces griseus subsp. griseus (strain JCM 4626 / CBS 651.72 / NBRC 13350 / KCC S-0626 / ISP 5235).